Consider the following 1294-residue polypeptide: Leucine-rich repeat receptor protein kinase MSP1 (1294 aa).

Positions 1–22 (MVSNSFWLFILLVSFIPISAWA) are cleaved as a signal peptide. LRR repeat units follow at residues 88–112 (FQSL…LGNL), 113–136 (QNLQ…LYNL), 138–160 (MLKE…IAQL), 161–184 (QHLT…LGSL), and 186–207 (NLEL…TFGN). N-linked (GlcNAc...) asparagine glycans are attached at residues asparagine 198, asparagine 207, and asparagine 220. LRR repeat units follow at residues 232 to 256 (LTNL…IGQL), 258 to 280 (NLEL…IGSL), 282 to 304 (QLKL…ISGL), 305 to 328 (SSLT…MGEL), 330 to 352 (NLTQ…LGNC), 353 to 376 (KKLT…FADL), 378 to 400 (AIVS…IQKW), 401 to 422 (KNAR…VLPL), 423 to 446 (QHLL…ICQA), 447 to 469 (NSLH…AFKG), 471 to 493 (TNLT…YLAE), 494 to 517 (LPLV…LWES), 519 to 541 (TLLE…IGKL), 542 to 565 (SVLQ…VGDL), 566 to 589 (RNLT…LFNC), 591 to 613 (KLAT…ISHL), 614 to 637 (TLLD…ICVG), 649 to 673 (LQHH…IKNC), 675 to 697 (MVMV…LGEL), 698 to 721 (TNLT…SGPL), 722 to 745 (VQLQ…IGQI), 746 to 770 (LPKI…LLCN), and 772 to 794 (YLNH…CPDG). N-linked (GlcNAc...) asparagine glycans are attached at residues asparagine 330 and asparagine 359. Asparagine 458 and asparagine 472 each carry an N-linked (GlcNAc...) asparagine glycan. N-linked (GlcNAc...) asparagine glycans are attached at residues asparagine 567, asparagine 570, and asparagine 601. 3 N-linked (GlcNAc...) asparagine glycosylation sites follow: asparagine 687, asparagine 699, and asparagine 704. N-linked (GlcNAc...) asparagine glycosylation is found at asparagine 805, asparagine 821, and asparagine 832. LRR repeat units follow at residues 822–846 (FTQL…LSDL) and 848–870 (SLNY…ICNI). A helical membrane pass occupies residues 917-937 (ITICAFTFVIIIVLVLLAVYL). The 281-residue stretch at 1002–1282 (FSKVHIIGDG…KGLKMTHGME (281 aa)) folds into the Protein kinase domain. Residues 1008–1016 (IGDGGFGTV) and lysine 1030 each bind ATP. Residue aspartate 1129 is the Proton acceptor of the active site.

It belongs to the protein kinase superfamily. Ser/Thr protein kinase family. In terms of assembly, interacts with TDL1A. In terms of tissue distribution, expressed in anthers and ovules during meiosis.

It localises to the cell membrane. It catalyses the reaction L-seryl-[protein] + ATP = O-phospho-L-seryl-[protein] + ADP + H(+). It carries out the reaction L-threonyl-[protein] + ATP = O-phospho-L-threonyl-[protein] + ADP + H(+). Its function is as follows. Receptor-like kinase that plays important roles in restricting the number of cells entering into male and female sporogenesis. Involved in cell specification during anther development and initiation of anther wall formation. The chain is Leucine-rich repeat receptor protein kinase MSP1 from Oryza sativa subsp. japonica (Rice).